A 330-amino-acid polypeptide reads, in one-letter code: Stearoyl-CoA desaturase 5 (330 aa).

Over 1–49 the chain is Cytoplasmic; sequence MPGPATDAGKIPFCDAKEEIRAGLESSEGGGGPERPGARGQRQNIVWRN. Asparagine 49 is a substrate binding site. A helical membrane pass occupies residues 50–70; sequence VVLMSLLHLGAVYSLVLIPKA. The Lumenal portion of the chain corresponds to 71–72; sequence KP. A helical membrane pass occupies residues 73 to 93; sequence LTLLWAYFCFLLAALGVTAGA. Residues histidine 94 and histidine 99 each coordinate Fe cation. A Histidine box-1 motif is present at residues 94–99; that stretch reads HRLWSH. Topologically, residues 94–193 are cytoplasmic; it reads HRLWSHRSYR…VVRIQRKYYK (100 aa). Substrate is bound by residues asparagine 122, arginine 129, and aspartate 130. The Fe cation site is built by histidine 131, histidine 134, and histidine 135. Residues 131–135 carry the Histidine box-2 motif; the sequence is HRAHH. Substrate contacts are provided by arginine 162 and lysine 163. A helical transmembrane segment spans residues 194–214; sequence ISVVLMCFVVPTLVPWYIWGE. Residue serine 215 is a topological domain, lumenal. The chain crosses the membrane as a helical span at residues 216 to 238; the sequence is LWNSYFLASILRYTISLNISWLV. Tryptophan 236 serves as a coordination point for substrate. The Cytoplasmic segment spans residues 239 to 330; the sequence is NSAAHMYGNR…RKARTGDSSA (92 aa). The Fe cation site is built by histidine 243, histidine 272, histidine 275, and histidine 276. The Histidine box-3 signature appears at 272-276; sequence HNYHH.

The protein belongs to the fatty acid desaturase type 1 family. As to quaternary structure, may self-associate and form homodimers. The cofactor is Fe(2+). Detected in fetal brain, and at lower levels in fetal kidney. Detected in adult brain and pancreas, and at lower levels in kidney and lung. Expressed in spiral ganglion cells and the organ of Corti of fetal cochlea.

It localises to the endoplasmic reticulum membrane. The enzyme catalyses octadecanoyl-CoA + 2 Fe(II)-[cytochrome b5] + O2 + 2 H(+) = (9Z)-octadecenoyl-CoA + 2 Fe(III)-[cytochrome b5] + 2 H2O. It carries out the reaction hexadecanoyl-CoA + 2 Fe(II)-[cytochrome b5] + O2 + 2 H(+) = (9Z)-hexadecenoyl-CoA + 2 Fe(III)-[cytochrome b5] + 2 H2O. Functionally, stearoyl-CoA desaturase that utilizes O(2) and electrons from reduced cytochrome b5 to introduce the first double bond into saturated fatty acyl-CoA substrates. Catalyzes the insertion of a cis double bond at the delta-9 position into fatty acyl-CoA substrates including palmitoyl-CoA and stearoyl-CoA. Gives rise to a mixture of 16:1 and 18:1 unsaturated fatty acids. Involved in neuronal cell proliferation and differentiation through down-regulation of EGFR/AKT/MAPK and Wnt signaling pathways. In Homo sapiens (Human), this protein is Stearoyl-CoA desaturase 5 (SCD5).